The primary structure comprises 599 residues: Afamin (599 aa).

Residues 1–21 form the signal peptide; it reads MKLLKLTGFIFFLFFLTESLT. 3 Albumin domains span residues 22–210, 211–403, and 404–599; these read LPTQ…IPVT, QYLK…KFNE, and TTEK…KIGN. Asn-33 carries an N-linked (GlcNAc...) (complex) asparagine glycan. Cystine bridges form between Cys-77/Cys-86, Cys-99/Cys-114, Cys-113/Cys-124, Cys-148/Cys-193, Cys-192/Cys-201, Cys-224/Cys-270, Cys-269/Cys-277, Cys-289/Cys-303, Cys-302/Cys-313, Cys-340/Cys-385, and Cys-384/Cys-393. N-linked (GlcNAc...) (complex) asparagine glycosylation occurs at Asn-109. A binding pocket for hydrophobic ligands region spans residues 215–319; it reads AFSSYQKHVC…RGQCIINSNK (105 aa). An N-linked (GlcNAc...) (complex) asparagine; atypical glycan is attached at Asn-383. Residue Asn-402 is glycosylated (N-linked (GlcNAc...) (complex) asparagine). Cystine bridges form between Cys-416/Cys-462, Cys-461/Cys-470, Cys-483/Cys-499, Cys-498/Cys-509, Cys-536/Cys-581, and Cys-580/Cys-589. Residue Asn-488 is glycosylated (N-linked (GlcNAc...) asparagine).

This sequence belongs to the ALB/AFP/VDB family. As to quaternary structure, forms a 1:1 complex with Wnt family members; interacts with WNT1, WNT2B, WNT3, WNT3A, WNT5A, WNT7A, WNT7B, WNT8, WNT9A, WNT9B, WNT10A and WNT10B. In terms of processing, N-glycosylated; more than 90% of the glycans are sialylated. As to expression, high level detected in plasma but also in extravascular fluids such as follicular and cerebrospinal fluids (at protein level).

The protein resides in the secreted. Functionally, functions as a carrier for hydrophobic molecules in body fluids. Essential for the solubility and activity of lipidated Wnt family members, including WNT1, WNT2B, WNT3, WNT3A, WNT5A, WNT7A, WNT7B, WNT8, WNT9A, WNT9B, WNT10A and WNT10B. Binds vitamin E. May transport vitamin E in body fluids under conditions where the lipoprotein system is not sufficient. May be involved in the transport of vitamin E across the blood-brain barrier. The protein is Afamin (AFM) of Homo sapiens (Human).